Here is a 182-residue protein sequence, read N- to C-terminus: Ribulose bisphosphate carboxylase small subunit, chloroplastic (182 aa).

The transit peptide at 1 to 58 (MASSMISSATVATVSRATPAQATMVAPFTGLKSTAAFPATRKSNNDITSLASNGGRVQ) directs the protein to the chloroplast.

It belongs to the RuBisCO small chain family. In terms of assembly, heterohexadecamer of 8 large and 8 small subunits.

Its subcellular location is the plastid. The protein resides in the chloroplast. Its function is as follows. RuBisCO catalyzes two reactions: the carboxylation of D-ribulose 1,5-bisphosphate, the primary event in carbon dioxide fixation, as well as the oxidative fragmentation of the pentose substrate. Both reactions occur simultaneously and in competition at the same active site. Although the small subunit is not catalytic it is essential for maximal activity. The sequence is that of Ribulose bisphosphate carboxylase small subunit, chloroplastic from Fagus crenata (Japanese beech).